The primary structure comprises 369 residues: MDAKLSPNQGLNISGIGLASSLAAGLGIAALTLDWMANRNPWQGTSLTLPLLLCTIASAIAGYFVVPLLQALKTGQIIREDGPQAHLKKAGTPTMGGIFFIPVAVVGACVLSNFATEVLAVSALTLSYGLIGWIDDWQILRRKSNKGISPRMKLALQIGFAAAFCLWLMFNQPANITSIALPWVSFALPLGFLFWPLAGFVLVAESNATNLTDGIDGLAGGTVAIALLALGAIVAPTSPALMVFCAALSGSCLGFLAHNRNPARVFMGDTGSLALGGALAAVALLTNSLVALFILSGIFFVETLSVMAQVSYYKATKGPDGKGKRLLKMAPLHHHLELSGWSELQVVSSFYVIAAILAAICLAIASGGA.

Transmembrane regions (helical) follow at residues 13–33 (ISGIGLASSLAAGLGIAALTL), 49–69 (LPLLLCTIASAIAGYFVVPLL), 95–115 (MGGIFFIPVAVVGACVLSNFA), 119–139 (LAVSALTLSYGLIGWIDDWQI), 154–174 (LALQIGFAAAFCLWLMFNQPA), 183–203 (WVSFALPLGFLFWPLAGFVLV), 215–235 (IDGLAGGTVAIALLALGAIVA), 237–257 (TSPALMVFCAALSGSCLGFLA), 281–301 (AVALLTNSLVALFILSGIFFV), and 346–366 (VVSSFYVIAAILAAICLAIAS).

Belongs to the glycosyltransferase 4 family. MraY subfamily. It depends on Mg(2+) as a cofactor.

The protein resides in the cell inner membrane. It carries out the reaction UDP-N-acetyl-alpha-D-muramoyl-L-alanyl-gamma-D-glutamyl-meso-2,6-diaminopimeloyl-D-alanyl-D-alanine + di-trans,octa-cis-undecaprenyl phosphate = di-trans,octa-cis-undecaprenyl diphospho-N-acetyl-alpha-D-muramoyl-L-alanyl-D-glutamyl-meso-2,6-diaminopimeloyl-D-alanyl-D-alanine + UMP. It functions in the pathway cell wall biogenesis; peptidoglycan biosynthesis. Functionally, catalyzes the initial step of the lipid cycle reactions in the biosynthesis of the cell wall peptidoglycan: transfers peptidoglycan precursor phospho-MurNAc-pentapeptide from UDP-MurNAc-pentapeptide onto the lipid carrier undecaprenyl phosphate, yielding undecaprenyl-pyrophosphoryl-MurNAc-pentapeptide, known as lipid I. The chain is Phospho-N-acetylmuramoyl-pentapeptide-transferase from Nostoc sp. (strain PCC 7120 / SAG 25.82 / UTEX 2576).